The following is a 237-amino-acid chain: Glutathione-independent glyoxalase HSP31 (237 aa).

Catalysis depends on residues C138, H139, and E170. The residue at position 138 (C138) is a Cysteine sulfinic acid (-SO2H).

The protein belongs to the peptidase C56 family. HSP31-like subfamily. As to quaternary structure, homodimer. Post-translationally, cys-138 is easily oxidized to sulfinic acid.

It localises to the cytoplasm. Its subcellular location is the P-body. It carries out the reaction methylglyoxal + H2O = (R)-lactate + H(+). Catalyzes the conversion of methylglyoxal (MG) to D-lactate in a single glutathione (GSH)-independent step. May play a role in detoxifying endogenously produced glyoxals. Involved in protection against reactive oxygen species (ROS). Important for viability in stationary phase. May negatively regulate TORC1 in response to nutrient limitation. This chain is Glutathione-independent glyoxalase HSP31, found in Saccharomyces cerevisiae (strain ATCC 204508 / S288c) (Baker's yeast).